The following is a 361-amino-acid chain: Ribosomal RNA large subunit methyltransferase M (361 aa).

Residues S187, 220–223 (CPGG), D239, D259, and D276 contribute to the S-adenosyl-L-methionine site. Catalysis depends on K305, which acts as the Proton acceptor.

Belongs to the class I-like SAM-binding methyltransferase superfamily. RNA methyltransferase RlmE family. RlmM subfamily. In terms of assembly, monomer.

It localises to the cytoplasm. The catalysed reaction is cytidine(2498) in 23S rRNA + S-adenosyl-L-methionine = 2'-O-methylcytidine(2498) in 23S rRNA + S-adenosyl-L-homocysteine + H(+). In terms of biological role, catalyzes the 2'-O-methylation at nucleotide C2498 in 23S rRNA. This chain is Ribosomal RNA large subunit methyltransferase M, found in Shewanella sp. (strain MR-7).